Consider the following 256-residue polypeptide: Expansin-like B1 (256 aa).

A signal peptide spans 1 to 24 (MAQLLRRHLPVILSLILFLSKATA). An N-linked (GlcNAc...) asparagine glycan is attached at Asn27. In terms of domain architecture, Expansin-like EG45 spans 46 to 150 (NGACEYGAFG…RRVSCTYPNK (105 aa)). In terms of domain architecture, Expansin-like CBD spans 164–249 (NYLEFEIWYQ…NWTAGATYDS (86 aa)). N-linked (GlcNAc...) asparagine glycans are attached at residues Asn189 and Asn240.

The protein belongs to the expansin family. Expansin-like B subfamily.

The protein localises to the secreted. In Oryza sativa subsp. japonica (Rice), this protein is Expansin-like B1 (EXLB1).